Reading from the N-terminus, the 165-residue chain is V-type proton ATPase 16 kDa proteolipid subunit (165 aa).

Topologically, residues 1-10 are lumenal; sequence MSSVFSGDET. The chain crosses the membrane as a helical span at residues 11-33; the sequence is APFFGFLGAASALIFSCMGAAYG. Topologically, residues 34-55 are cytoplasmic; that stretch reads TAKSGVGVASMGVMRPELVMKS. A helical transmembrane segment spans residues 56–76; the sequence is IVPVVMAGVLGIYGLIIAVII. The Lumenal segment spans residues 77–95; that stretch reads STGINPKAKPYYLFDGYAH. A helical membrane pass occupies residues 96–117; that stretch reads LSSGLACGLAGLAAGMAIGIVG. Over 118–129 the chain is Cytoplasmic; it reads DAGVRANAQQPK. The helical transmembrane segment at 130 to 155 threads the bilayer; that stretch reads LFVGMILILIFAEALALYGLIVGIIL. Topologically, residues 156–165 are lumenal; it reads SSRAGQSRAD.

Belongs to the V-ATPase proteolipid subunit family. In terms of assembly, V-ATPase is a heteromultimeric enzyme composed of a peripheral catalytic V1 complex (main components: subunits A, B, C, D, E, and F) attached to an integral membrane V0 proton pore complex (main component: the proteolipid protein; which is present as a hexamer that forms the proton-conducting pore).

The protein localises to the vacuole membrane. Its function is as follows. Proton-conducting pore forming subunit of the membrane integral V0 complex of vacuolar ATPase. V-ATPase is responsible for acidifying a variety of intracellular compartments in eukaryotic cells. The sequence is that of V-type proton ATPase 16 kDa proteolipid subunit (VATP-P1) from Oryza sativa subsp. indica (Rice).